The chain runs to 566 residues: Autophagy-related protein 22-1 (566 aa).

The helical transmembrane segment at 38-58 (YPIAAEVFAVVAVGAFLPVIL) threads the bilayer. Residue asparagine 103 is glycosylated (N-linked (GlcNAc...) asparagine). Transmembrane regions (helical) follow at residues 110–130 (SFAM…LVCF), 146–168 (AFAY…VYFL), and 179–199 (SLGC…ANHA). Asparagine 200 carries N-linked (GlcNAc...) asparagine glycosylation. Helical transmembrane passes span 242–262 (GYGY…LWLF), 278–298 (VILL…LLWL), 351–371 (FLIS…TAVL), 382–402 (IAIA…AFAW), 416–436 (ILLC…LGFI), 451–471 (WEIY…SSYA), 488–510 (FALY…GWLV), and 519–539 (AFIF…MLDV). The interval 547-566 (KAMADGEGRGRGTYERVREE) is disordered.

It belongs to the ATG22 family.

It localises to the vacuole membrane. Its function is as follows. Vacuolar effluxer which mediate the efflux of amino acids resulting from autophagic degradation. The release of autophagic amino acids allows the maintenance of protein synthesis and viability during nitrogen starvation. The chain is Autophagy-related protein 22-1 (ATG22-1) from Phaeosphaeria nodorum (strain SN15 / ATCC MYA-4574 / FGSC 10173) (Glume blotch fungus).